The chain runs to 113 residues: Putative membrane protein insertion efficiency factor (113 aa).

It belongs to the UPF0161 family.

Its subcellular location is the cell inner membrane. Its function is as follows. Could be involved in insertion of integral membrane proteins into the membrane. This is Putative membrane protein insertion efficiency factor from Campylobacter curvus (strain 525.92).